Here is a 671-residue protein sequence, read N- to C-terminus: Probable boron transporter 6 (671 aa).

At 1–37 (MKSEGESGPFQGILRDIEGRRKCYKQDWIRGIKTGIR) the chain is on the cytoplasmic side. A helical membrane pass occupies residues 38–58 (ILAPTCYIFFASSLPVVAFGE). At 59-77 (QLSKHTGGALSAVETLAST) the chain is on the extracellular side. Residues 78–98 (SICGIIHAIFGGQPLLIVGVA) form a helical membrane-spanning segment. The Cytoplasmic segment spans residues 99–123 (EPTIIMYTYLYSFCISRPDIGRELY). A helical transmembrane segment spans residues 124–144 (LAWVAWVCVWTSVLLILLSIF). At 145-157 (NAGTIITRFTRIA) the chain is on the extracellular side. Residues 158–178 (GELFGMLIAVLFLQEAIKGLI) form a helical membrane-spanning segment. Residues 179–195 (SEFHAPEIKNQETGKSH) lie on the Cytoplasmic side of the membrane. The helical transmembrane segment at 196–216 (FLLIYANGLLAVIFSLGLLIT) threads the bilayer. Residues 217–235 (ALKSRRAKSWKYGFGWLRS) lie on the Extracellular side of the membrane. Residues 236–256 (FIGDYGVPLMVLLWTALSYTV) form a helical membrane-spanning segment. Residues 257–291 (PSEVLPSVPRRLFCPLPWEPASLYHWTVVKDMGKV) lie on the Cytoplasmic side of the membrane. The helical transmembrane segment at 292-312 (PIMYILAAFIPGVMIAGLYFF) threads the bilayer. The Extracellular segment spans residues 313–332 (DHSVASQMAQQKEFNLKNPS). Residues 333 to 353 (AYHYDIFLLGIITLICGLLGL) form a helical membrane-spanning segment. Over 354–469 (PPSNGVLPQA…EQRVSNLLQS (116 aa)) the chain is Cytoplasmic. The chain crosses the membrane as a helical span at residues 470–490 (VLVGLTLLAVTVIKMIPSSVL). At 491–557 (WGYFAYMAID…QLVYFLLCYG (67 aa)) the chain is on the extracellular side. Residues 558–578 (MTWIPMAGIFFPALFFLLISI) traverse the membrane as a helical segment. Topologically, residues 579–671 (REHLLPKLFD…EEKHVTFEPH (93 aa)) are cytoplasmic.

The protein belongs to the anion exchanger (TC 2.A.31.3) family.

It is found in the membrane. Probable boron transporter. Boron is essential for maintaining the integrity of plants cell walls. The chain is Probable boron transporter 6 (BOR6) from Arabidopsis thaliana (Mouse-ear cress).